A 418-amino-acid chain; its full sequence is Deubiquitinase and deneddylase Dub1 (418 aa).

The span at 1–10 (MLSPTNSISK) shows a compositional bias: polar residues. The interval 1–23 (MLSPTNSISKTAPVPPQDSSKPV) is disordered. A helical membrane pass occupies residues 40-60 (TALAVLLVVVTLGLILLFYSF). Positions 72 to 144 (TRPSTKEQPT…PLPPKAPKPV (73 aa)) are disordered. Pro residues predominate over residues 86 to 141 (VPLPSPPLAVPRPSTPPPPVISRPSTPPAPTPAISPPSTPSAPKPSTPPPLPPKAP). Catalysis depends on residues His288, Asp305, and Cys358.

It belongs to the peptidase C48 family.

The protein resides in the secreted. It is found in the host cell. Its subcellular location is the membrane. In terms of biological role, effector proteins function to alter host cell physiology and promote bacterial survival in host tissues. This protease possesses deubiquitinating and deneddylating activities. In Chlamydia trachomatis serovar B (strain Jali20/OT), this protein is Deubiquitinase and deneddylase Dub1 (cdu1).